The primary structure comprises 208 residues: Ribosomal RNA small subunit methyltransferase G (208 aa).

Residues Gly-78, Phe-83, 101–103 (ERS), 129–130 (IE), and Arg-142 each bind S-adenosyl-L-methionine.

The protein belongs to the methyltransferase superfamily. RNA methyltransferase RsmG family.

It localises to the cytoplasm. Specifically methylates the N7 position of a guanine in 16S rRNA. This chain is Ribosomal RNA small subunit methyltransferase G, found in Borreliella burgdorferi (strain ZS7) (Borrelia burgdorferi).